A 276-amino-acid chain; its full sequence is Undecaprenyl-diphosphatase (276 aa).

Helical transmembrane passes span 46–66 (AGASFAAVIQLGSLGAVLIYF), 94–114 (LMGILVGTLPIVIAGWAVKAI), 122–142 (LWVVAAAAIGLALALGWAERV), 152–172 (LGIGDGLWVGLAQALALIPGV), 196–216 (SFLLGIPALFLAGVAEFIAEF), 226–246 (LGTLSAFVFSYGSIDWLIRFL), and 253–273 (VFIVYRIGFGLFIFLGLALGF).

The protein belongs to the UppP family.

It is found in the cell inner membrane. The catalysed reaction is di-trans,octa-cis-undecaprenyl diphosphate + H2O = di-trans,octa-cis-undecaprenyl phosphate + phosphate + H(+). Catalyzes the dephosphorylation of undecaprenyl diphosphate (UPP). Confers resistance to bacitracin. This chain is Undecaprenyl-diphosphatase, found in Synechococcus sp. (strain JA-3-3Ab) (Cyanobacteria bacterium Yellowstone A-Prime).